Here is a 174-residue protein sequence, read N- to C-terminus: ATP synthase subunit delta, sodium ion specific (174 aa).

Belongs to the ATPase delta chain family. In terms of assembly, F-type ATPases have 2 components, F(1) - the catalytic core - and F(0) - the membrane proton channel. F(1) has five subunits: alpha(3), beta(3), gamma(1), delta(1), epsilon(1). F(0) has three main subunits: a(1), b(2) and c(10-14). The alpha and beta chains form an alternating ring which encloses part of the gamma chain. F(1) is attached to F(0) by a central stalk formed by the gamma and epsilon chains, while a peripheral stalk is formed by the delta and b chains.

The protein localises to the cell inner membrane. In terms of biological role, f(1)F(0) ATP synthase produces ATP from ADP in the presence of a proton or sodium gradient. F-type ATPases consist of two structural domains, F(1) containing the extramembraneous catalytic core and F(0) containing the membrane proton channel, linked together by a central stalk and a peripheral stalk. During catalysis, ATP synthesis in the catalytic domain of F(1) is coupled via a rotary mechanism of the central stalk subunits to proton translocation. This protein is part of the stalk that links CF(0) to CF(1). It either transmits conformational changes from CF(0) to CF(1) or is implicated in proton conduction. The chain is ATP synthase subunit delta, sodium ion specific from Propionigenium modestum.